Reading from the N-terminus, the 320-residue chain is tRNA dimethylallyltransferase (320 aa).

Gly-5–Ser-12 contacts ATP. Substrate is bound at residue Thr-7–Ser-12. Positions Asp-30–Gln-33 are interaction with substrate tRNA.

It belongs to the IPP transferase family. In terms of assembly, monomer. Mg(2+) serves as cofactor.

It catalyses the reaction adenosine(37) in tRNA + dimethylallyl diphosphate = N(6)-dimethylallyladenosine(37) in tRNA + diphosphate. In terms of biological role, catalyzes the transfer of a dimethylallyl group onto the adenine at position 37 in tRNAs that read codons beginning with uridine, leading to the formation of N6-(dimethylallyl)adenosine (i(6)A). In Heliobacterium modesticaldum (strain ATCC 51547 / Ice1), this protein is tRNA dimethylallyltransferase.